Here is a 161-residue protein sequence, read N- to C-terminus: Succinate dehydrogenase assembly factor 2, mitochondrial (161 aa).

The transit peptide at 1–31 (MSLLRVTRSSGHLSAVCRLPARSISTTSILL) directs the protein to the mitochondrion.

Belongs to the SDHAF2 family. As to quaternary structure, interacts with the flavoprotein subunit within the SDH catalytic dimer.

It localises to the mitochondrion matrix. Its function is as follows. Plays an essential role in the assembly of succinate dehydrogenase (SDH), an enzyme complex (also referred to as respiratory complex II) that is a component of both the tricarboxylic acid (TCA) cycle and the mitochondrial electron transport chain, and which couples the oxidation of succinate to fumarate with the reduction of ubiquinone (coenzyme Q) to ubiquinol. Required for flavinylation (covalent attachment of FAD) of the flavoprotein subunit of the SDH catalytic dimer. In Aedes aegypti (Yellowfever mosquito), this protein is Succinate dehydrogenase assembly factor 2, mitochondrial.